The sequence spans 485 residues: N-succinylglutamate 5-semialdehyde dehydrogenase (485 aa).

NAD(+) is bound at residue 220 to 225 (GSANTG). Catalysis depends on residues E243 and C278.

The protein belongs to the aldehyde dehydrogenase family. AstD subfamily.

The catalysed reaction is N-succinyl-L-glutamate 5-semialdehyde + NAD(+) + H2O = N-succinyl-L-glutamate + NADH + 2 H(+). The protein operates within amino-acid degradation; L-arginine degradation via AST pathway; L-glutamate and succinate from L-arginine: step 4/5. In terms of biological role, catalyzes the NAD-dependent reduction of succinylglutamate semialdehyde into succinylglutamate. The polypeptide is N-succinylglutamate 5-semialdehyde dehydrogenase (Aliivibrio salmonicida (strain LFI1238) (Vibrio salmonicida (strain LFI1238))).